The chain runs to 98 residues: Cytochrome b (98 aa).

A run of 3 helical transmembrane segments spans residues 1–18 (LLGLCLITQILTGLFLAM), 42–63 (WLIRNVHANGASFFFICLYLHV), and 78–98 (WNIGVVLLLLTMMTAFVGYVL). The heme b site is built by His48 and His62.

The protein belongs to the cytochrome b family. In terms of assembly, the cytochrome bc1 complex contains 3 respiratory subunits (MT-CYB, CYC1 and UQCRFS1), 2 core proteins (UQCRC1 and UQCRC2) and probably 6 low-molecular weight proteins. It depends on heme b as a cofactor.

It localises to the mitochondrion inner membrane. Its function is as follows. Component of the ubiquinol-cytochrome c reductase complex (complex III or cytochrome b-c1 complex) that is part of the mitochondrial respiratory chain. The b-c1 complex mediates electron transfer from ubiquinol to cytochrome c. Contributes to the generation of a proton gradient across the mitochondrial membrane that is then used for ATP synthesis. The chain is Cytochrome b (mt-cyb) from Scaphirhynchus platorynchus (Shovelnose sturgeon).